The sequence spans 919 residues: Isoleucine--tRNA ligase (919 aa).

The 'HIGH' region signature appears at Pro57–Thr67. Residue Glu552 coordinates L-isoleucyl-5'-AMP. Positions Lys593–Ser597 match the 'KMSKS' region motif. Lys596 is a binding site for ATP. Zn(2+) is bound by residues Cys886, Cys889, Cys906, and Cys909.

Belongs to the class-I aminoacyl-tRNA synthetase family. IleS type 1 subfamily. As to quaternary structure, monomer. Requires Zn(2+) as cofactor.

The protein resides in the cytoplasm. It catalyses the reaction tRNA(Ile) + L-isoleucine + ATP = L-isoleucyl-tRNA(Ile) + AMP + diphosphate. Functionally, catalyzes the attachment of isoleucine to tRNA(Ile). As IleRS can inadvertently accommodate and process structurally similar amino acids such as valine, to avoid such errors it has two additional distinct tRNA(Ile)-dependent editing activities. One activity is designated as 'pretransfer' editing and involves the hydrolysis of activated Val-AMP. The other activity is designated 'posttransfer' editing and involves deacylation of mischarged Val-tRNA(Ile). This is Isoleucine--tRNA ligase from Petrotoga mobilis (strain DSM 10674 / SJ95).